Here is a 79-residue protein sequence, read N- to C-terminus: MIKPLIEFCVGNLASGSQAALEKLEKDPNLDVMEYGCLGYCGICFEGPFALVNGEVVQGATVEELVNNVYEYLDENPMF.

Belongs to the UPF0349 family.

The chain is UPF0349 protein BCE_5075 from Bacillus cereus (strain ATCC 10987 / NRS 248).